The primary structure comprises 192 residues: Crossover junction endodeoxyribonuclease RuvC (192 aa).

Active-site residues include Asp8, Glu67, and Asp139. Asp8, Glu67, and Asp139 together coordinate Mg(2+).

It belongs to the RuvC family. In terms of assembly, homodimer which binds Holliday junction (HJ) DNA. The HJ becomes 2-fold symmetrical on binding to RuvC with unstacked arms; it has a different conformation from HJ DNA in complex with RuvA. In the full resolvosome a probable DNA-RuvA(4)-RuvB(12)-RuvC(2) complex forms which resolves the HJ. The cofactor is Mg(2+).

It localises to the cytoplasm. It carries out the reaction Endonucleolytic cleavage at a junction such as a reciprocal single-stranded crossover between two homologous DNA duplexes (Holliday junction).. Its function is as follows. The RuvA-RuvB-RuvC complex processes Holliday junction (HJ) DNA during genetic recombination and DNA repair. Endonuclease that resolves HJ intermediates. Cleaves cruciform DNA by making single-stranded nicks across the HJ at symmetrical positions within the homologous arms, yielding a 5'-phosphate and a 3'-hydroxyl group; requires a central core of homology in the junction. The consensus cleavage sequence is 5'-(A/T)TT(C/G)-3'. Cleavage occurs on the 3'-side of the TT dinucleotide at the point of strand exchange. HJ branch migration catalyzed by RuvA-RuvB allows RuvC to scan DNA until it finds its consensus sequence, where it cleaves and resolves the cruciform DNA. In Haemophilus ducreyi (strain 35000HP / ATCC 700724), this protein is Crossover junction endodeoxyribonuclease RuvC.